The chain runs to 425 residues: CinA-like protein (425 aa).

This sequence belongs to the CinA family.

This chain is CinA-like protein, found in Trichodesmium erythraeum (strain IMS101).